We begin with the raw amino-acid sequence, 102 residues long: Serum amyloid A-5 protein (102 aa).

The disordered stretch occupies residues 68-102 (GRGHEDSMADQEANRWGRSGNDPNHYRPAGLPDKY). A compositionally biased stretch (basic and acidic residues) spans 69–82 (RGHEDSMADQEANR).

Belongs to the SAA family. As to expression, expressed by the liver; secreted in plasma.

The protein localises to the secreted. In terms of biological role, major acute phase reactant. Apolipoprotein of the HDL complex. The sequence is that of Serum amyloid A-5 protein from Mesocricetus auratus (Golden hamster).